A 128-amino-acid chain; its full sequence is Small ribosomal subunit protein uS12 (128 aa).

A disordered region spans residues 1–29 (MPTINQLIRKGREPKERKSKSPALMGNPQ). Residue Asp89 is modified to 3-methylthioaspartic acid. The tract at residues 106–128 (GVEGRRQGRSKYGAKRPKEGGKK) is disordered.

Belongs to the universal ribosomal protein uS12 family. In terms of assembly, part of the 30S ribosomal subunit. Contacts proteins S8 and S17. May interact with IF1 in the 30S initiation complex.

Functionally, with S4 and S5 plays an important role in translational accuracy. Interacts with and stabilizes bases of the 16S rRNA that are involved in tRNA selection in the A site and with the mRNA backbone. Located at the interface of the 30S and 50S subunits, it traverses the body of the 30S subunit contacting proteins on the other side and probably holding the rRNA structure together. The combined cluster of proteins S8, S12 and S17 appears to hold together the shoulder and platform of the 30S subunit. In Dictyoglomus turgidum (strain DSM 6724 / Z-1310), this protein is Small ribosomal subunit protein uS12.